A 130-amino-acid polypeptide reads, in one-letter code: Ribosome-binding factor A (130 aa).

Residues 111–130 (RDLDDVGPEATSSDEDAEQR) are disordered.

It belongs to the RbfA family. As to quaternary structure, monomer. Binds 30S ribosomal subunits, but not 50S ribosomal subunits or 70S ribosomes.

Its subcellular location is the cytoplasm. Functionally, one of several proteins that assist in the late maturation steps of the functional core of the 30S ribosomal subunit. Associates with free 30S ribosomal subunits (but not with 30S subunits that are part of 70S ribosomes or polysomes). Required for efficient processing of 16S rRNA. May interact with the 5'-terminal helix region of 16S rRNA. This is Ribosome-binding factor A from Xanthomonas euvesicatoria pv. vesicatoria (strain 85-10) (Xanthomonas campestris pv. vesicatoria).